The chain runs to 250 residues: Ribosomal RNA small subunit methyltransferase G (250 aa).

Residues G78, L83, 129-130, and R144 contribute to the S-adenosyl-L-methionine site; that span reads AE. The tract at residues 224-250 is disordered; the sequence is IAAPRKRGGQQRRAGHARGTSNRRRGT. A compositionally biased stretch (basic residues) spans 227–250; sequence PRKRGGQQRRAGHARGTSNRRRGT.

This sequence belongs to the methyltransferase superfamily. RNA methyltransferase RsmG family.

It is found in the cytoplasm. Its function is as follows. Specifically methylates the N7 position of guanine in position 518 of 16S rRNA. This Nocardioides sp. (strain ATCC BAA-499 / JS614) protein is Ribosomal RNA small subunit methyltransferase G.